The primary structure comprises 375 residues: Protein RecA (375 aa).

Positions 1–20 (MPAEMKSAASGSDPRSSGER) are disordered. ATP is bound at residue 79 to 86 (GPESSGKT).

This sequence belongs to the RecA family.

The protein resides in the cytoplasm. In terms of biological role, can catalyze the hydrolysis of ATP in the presence of single-stranded DNA, the ATP-dependent uptake of single-stranded DNA by duplex DNA, and the ATP-dependent hybridization of homologous single-stranded DNAs. It interacts with LexA causing its activation and leading to its autocatalytic cleavage. This chain is Protein RecA, found in Parasynechococcus marenigrum (strain WH8102).